Reading from the N-terminus, the 265-residue chain is 4-hydroxy-tetrahydrodipicolinate reductase (265 aa).

NAD(+) is bound by residues 7–12 (GASGRM) and D33. Position 34 (R34) interacts with NADP(+). Residues 96 to 98 (GTT) and 120 to 123 (AANM) each bind NAD(+). H153 acts as the Proton donor/acceptor in catalysis. (S)-2,3,4,5-tetrahydrodipicolinate is bound at residue H154. K157 functions as the Proton donor in the catalytic mechanism. A (S)-2,3,4,5-tetrahydrodipicolinate-binding site is contributed by 163–164 (GT).

The protein belongs to the DapB family.

Its subcellular location is the cytoplasm. It carries out the reaction (S)-2,3,4,5-tetrahydrodipicolinate + NAD(+) + H2O = (2S,4S)-4-hydroxy-2,3,4,5-tetrahydrodipicolinate + NADH + H(+). The catalysed reaction is (S)-2,3,4,5-tetrahydrodipicolinate + NADP(+) + H2O = (2S,4S)-4-hydroxy-2,3,4,5-tetrahydrodipicolinate + NADPH + H(+). It functions in the pathway amino-acid biosynthesis; L-lysine biosynthesis via DAP pathway; (S)-tetrahydrodipicolinate from L-aspartate: step 4/4. Its function is as follows. Catalyzes the conversion of 4-hydroxy-tetrahydrodipicolinate (HTPA) to tetrahydrodipicolinate. This chain is 4-hydroxy-tetrahydrodipicolinate reductase, found in Burkholderia vietnamiensis (strain G4 / LMG 22486) (Burkholderia cepacia (strain R1808)).